The chain runs to 420 residues: ATP phosphoribosyltransferase regulatory subunit (420 aa).

It belongs to the class-II aminoacyl-tRNA synthetase family. HisZ subfamily. Heteromultimer composed of HisG and HisZ subunits.

The protein resides in the cytoplasm. It participates in amino-acid biosynthesis; L-histidine biosynthesis; L-histidine from 5-phospho-alpha-D-ribose 1-diphosphate: step 1/9. Required for the first step of histidine biosynthesis. May allow the feedback regulation of ATP phosphoribosyltransferase activity by histidine. This chain is ATP phosphoribosyltransferase regulatory subunit, found in Bacillus cereus (strain AH187).